We begin with the raw amino-acid sequence, 247 residues long: Protein NipSnap homolog 3A (247 aa).

An N6-acetyllysine mark is found at Lys-48 and Lys-166.

This sequence belongs to the NipSnap family.

The protein localises to the cytoplasm. The protein resides in the cytosol. The polypeptide is Protein NipSnap homolog 3A (NIPSNAP3A) (Pongo abelii (Sumatran orangutan)).